The sequence spans 595 residues: MLPVQTSNLAAAFTDAVRALAPADATLPAVTFERPKVAAHGDLACNVAMQVARALKSNPRELAQRIVDAVQADTRAQGLVQAMEIAGPGFINLRLTPAAKADVLRAVLAEGDHYGARERGVHGQVLVEFVSANPTGPLHVGHGRQAALGDALANLLSWQGWHVHREFYYNDAGVQIQTLALSVQARARGLKPGDASWPEAAYNGDYIADIAADFLAGKTVSASDGEPVTASGNVEDIDSIRKFAVTYLRNEQDIDLQAFGVKFDRYYLESSLYSDGRVEAAVQSLVGKGKTYESEGALWLRTTDDGDDKDRVMKKSDGTYTYFVPDVAYHTTKWERGFTKVINVQGSDHHGTIARVRAGLQGLDMGIPQGYPDYVLHKMVTVMKNGEEVKISKRAGSYVTVRDLIEWSNGGDETIRGCLDTGVADWPQHFTRGRDAVRFFLLSRKADTEFVFDVDLALKQNDENPVYYVQYAHARICSIFESWGGADWEARLAELAGADLSAVTGPEASAQAQALGRRLAEFPDMLSGAAAELAPHAVAFYLRDLAGDFHAFYNADRVLVDDEAVKRARLALLAATRQVLRNGLAVIGVSAPRRM.

The 'HIGH' region motif lies at 132–142; it reads ANPTGPLHVGH.

The protein belongs to the class-I aminoacyl-tRNA synthetase family. Monomer.

Its subcellular location is the cytoplasm. It catalyses the reaction tRNA(Arg) + L-arginine + ATP = L-arginyl-tRNA(Arg) + AMP + diphosphate. In Cupriavidus necator (strain ATCC 17699 / DSM 428 / KCTC 22496 / NCIMB 10442 / H16 / Stanier 337) (Ralstonia eutropha), this protein is Arginine--tRNA ligase.